Consider the following 1135-residue polypeptide: Ubiquitin carboxyl-terminal hydrolase 7 (1135 aa).

The MATH domain occupies 31–172 (EGHLSLDIDC…NDTIKLRCRF (142 aa)). The USP domain maps to 193–503 (IGLRNQGATC…SAYMLVYVRD (311 aa)). Residue Cys-202 is the Nucleophile of the active site. Catalysis depends on His-442, which acts as the Proton acceptor.

Belongs to the peptidase C19 family.

The protein resides in the nucleus. The catalysed reaction is Thiol-dependent hydrolysis of ester, thioester, amide, peptide and isopeptide bonds formed by the C-terminal Gly of ubiquitin (a 76-residue protein attached to proteins as an intracellular targeting signal).. Functionally, hydrolase that deubiquitinates target proteins. May play a role in regulating the levels of endogenous siRNA biogenesis. This chain is Ubiquitin carboxyl-terminal hydrolase 7, found in Caenorhabditis elegans.